A 137-amino-acid chain; its full sequence is MANKPSAEELKKNLSEMQFYVTQNHGTEPPFTGRLLHNKRDGVYHCLICDAPLFHSETKYDSGCGWPSFYEPVSEESIRYIKDLSHGMQRIEIRCGNCDAHLGHVFPDGPQPTGERYCVNSASLRFTDGENGEEING.

In terms of domain architecture, MsrB spans 7 to 129 (AEELKKNLSE…NSASLRFTDG (123 aa)). Zn(2+)-binding residues include C46, C49, C95, and C98. The active-site Nucleophile is the C118.

Belongs to the MsrB Met sulfoxide reductase family. Zn(2+) is required as a cofactor.

It carries out the reaction L-methionyl-[protein] + [thioredoxin]-disulfide + H2O = L-methionyl-(R)-S-oxide-[protein] + [thioredoxin]-dithiol. This is Peptide methionine sulfoxide reductase MsrB from Escherichia coli O8 (strain IAI1).